The sequence spans 461 residues: Cysteine--tRNA ligase (461 aa).

C28 is a Zn(2+) binding site. Residues 30–40 (ITVYDLCHIGH) carry the 'HIGH' region motif. 3 residues coordinate Zn(2+): C209, H234, and E238. A 'KMSKS' region motif is present at residues 266-270 (KMSKS). K269 is an ATP binding site.

Belongs to the class-I aminoacyl-tRNA synthetase family. In terms of assembly, monomer. It depends on Zn(2+) as a cofactor.

It is found in the cytoplasm. It carries out the reaction tRNA(Cys) + L-cysteine + ATP = L-cysteinyl-tRNA(Cys) + AMP + diphosphate. The protein is Cysteine--tRNA ligase of Enterobacter sp. (strain 638).